The primary structure comprises 495 residues: ATP synthase subunit beta, chloroplastic (495 aa).

172-179 (GGAGVGKT) is an ATP binding site.

This sequence belongs to the ATPase alpha/beta chains family. F-type ATPases have 2 components, CF(1) - the catalytic core - and CF(0) - the membrane proton channel. CF(1) has five subunits: alpha(3), beta(3), gamma(1), delta(1), epsilon(1). CF(0) has four main subunits: a(1), b(1), b'(1) and c(9-12).

It is found in the plastid. Its subcellular location is the chloroplast thylakoid membrane. The enzyme catalyses ATP + H2O + 4 H(+)(in) = ADP + phosphate + 5 H(+)(out). In terms of biological role, produces ATP from ADP in the presence of a proton gradient across the membrane. The catalytic sites are hosted primarily by the beta subunits. The polypeptide is ATP synthase subunit beta, chloroplastic (Pseudogaltonia clavata (Cape hyacinth)).